The chain runs to 148 residues: Large ribosomal subunit protein bL9 (148 aa).

It belongs to the bacterial ribosomal protein bL9 family.

Functionally, binds to the 23S rRNA. In Syntrophobacter fumaroxidans (strain DSM 10017 / MPOB), this protein is Large ribosomal subunit protein bL9.